A 304-amino-acid polypeptide reads, in one-letter code: MNLILEFLLLVGVIIYSYLESLVKFFIPRRRKSVTGQTVLITGAGHGIGRLTAYEFAKQKSRLVLWDINKRGVEETADKCRKLGAVVHVFVVDCSNRAEIYNSVDQVKREVGDVEIVVNNAGAIYPADLLSAKDEEITKTFEVNILGHFWIIKALLPSMLRRNSGHIVTVASVCGHGVIPYLIPYCSSKFAAVGFHRALTAELDTLGKTGIQTSCLCPVFVNTGFTKNPSTRLWPVLEPEEVARSLINGILTNKKMIFVPSYINISLILEKGPGFSSKHPHGGSQQPVTPIPGDLTPSSDFLKH.

The first 19 residues, 1–19 (MNLILEFLLLVGVIIYSYL), serve as a signal peptide directing secretion. At serine 33 the chain carries Phosphoserine. Position 40–67 (40–67 (LITGAGHGIGRLTAYEFAKQKSRLVLWD)) interacts with NAD(+). Lysine 79 carries the post-translational modification N6-acetyllysine. Residue serine 172 coordinates substrate. Tyrosine 185 (proton acceptor) is an active-site residue. Lysine 189 serves as a coordination point for NAD(+). Residues 276–304 (SSKHPHGGSQQPVTPIPGDLTPSSDFLKH) form a disordered region.

It belongs to the short-chain dehydrogenases/reductases (SDR) family. In terms of tissue distribution, expressed predominantly in the liver (at protein level).

It localises to the lipid droplet. The protein resides in the endoplasmic reticulum. The enzyme catalyses 17beta-estradiol + NAD(+) = estrone + NADH + H(+). It catalyses the reaction all-trans-retinol + NAD(+) = all-trans-retinal + NADH + H(+). The catalysed reaction is all-trans-retinal + NAD(+) + H2O = all-trans-retinoate + NADH + 2 H(+). Its function is as follows. Plays a pivotal role in hepatic lipid metabolism. In vitro, it catalyzes the oxidation of a variety of lipid substrates, including 17beta-estradiol, retinol, retinal, and leukotriene B4. The sequence is that of 17-beta-hydroxysteroid dehydrogenase 13 (Hsd17b13) from Mus musculus (Mouse).